A 342-amino-acid polypeptide reads, in one-letter code: Phosphate acyltransferase (342 aa).

It belongs to the PlsX family. In terms of assembly, homodimer. Probably interacts with PlsY.

Its subcellular location is the cytoplasm. It carries out the reaction a fatty acyl-[ACP] + phosphate = an acyl phosphate + holo-[ACP]. It participates in lipid metabolism; phospholipid metabolism. In terms of biological role, catalyzes the reversible formation of acyl-phosphate (acyl-PO(4)) from acyl-[acyl-carrier-protein] (acyl-ACP). This enzyme utilizes acyl-ACP as fatty acyl donor, but not acyl-CoA. This Shewanella pealeana (strain ATCC 700345 / ANG-SQ1) protein is Phosphate acyltransferase.